The following is a 631-amino-acid chain: MIKFTNENLIRGIRMTISAKSRHLALGTDMTRKFSLSCRFLNKANLTEEEKELLNEPRARDYVDVCIVGGGPAGLATAIKLKQLDNSSGTGQLRVVVLEKSSVLGGQTVSGAILEPGVWKELFPDEKSDIGIPLPKELATLVTKEHLKFLKGKWAISVPEPSQMINKGRNYIVSLNQVVGYLGEKAEEVGVEVYPGIAVSDLIYDENNAVKGVITKDAGISKSGKPKETFERGMEFWARQTVLAEGCHGSLTKQALAKYDLRKGRQHQTYGLGIKEVWEVKPENFNKGFAAHTMGYPLTNDVYGGGFQYHFGDGLVTVGLVVGLDYKNPYVSPYKEFQKMKHHPYYSKVLEGGKCIAYAARALNEGGLQSVPKLNFPGGVLVGASAGFMNVPKIKGTHTAMKSGLLAAESIFESIKGLPVLEEVEDEDAKMAMFDKEATINLESYESAFKESSIYKELYEVRNIRPSFSGKLGGYGGMIYSGIDSLILKGKVPWTLKFDEKNDGEILEPASKYKPIEYPKPDGVISFDILTSVSRTGTYHDDDEPCHLRVPGQDMVKYAERSFPVWKGVESRFCPAGVYEFVKDEKSPVGTRLQINSQNCIHCKTCDIKAPRQDITWKVPEGGDGPKYTLT.

An FAD-binding site is contributed by 65-79 (VCIVGGGPAGLATAI). [4Fe-4S] cluster is bound by residues C574, C600, C603, and C606. The 30-residue stretch at 591–620 (TRLQINSQNCIHCKTCDIKAPRQDITWKVP) folds into the 4Fe-4S ferredoxin-type domain.

This sequence belongs to the ETF-QO/FixC family. [4Fe-4S] cluster serves as cofactor. Requires FAD as cofactor.

Its subcellular location is the mitochondrion inner membrane. The enzyme catalyses a ubiquinone + reduced [electron-transfer flavoprotein] = a ubiquinol + oxidized [electron-transfer flavoprotein] + H(+). Its function is as follows. Accepts electrons from ETF and reduces ubiquinone. The polypeptide is Probable electron transfer flavoprotein-ubiquinone oxidoreductase, mitochondrial (CIR2) (Saccharomyces cerevisiae (strain ATCC 204508 / S288c) (Baker's yeast)).